A 155-amino-acid chain; its full sequence is Histone H2B.4 (155 aa).

The span at M1–A28 shows a compositional bias: basic and acidic residues. Residues M1–V62 form a disordered region. A compositionally biased stretch (basic residues) spans P29–K40. K151 is covalently cross-linked (Glycyl lysine isopeptide (Lys-Gly) (interchain with G-Cter in ubiquitin)).

This sequence belongs to the histone H2B family. In terms of assembly, the nucleosome is a histone octamer containing two molecules each of H2A, H2B, H3 and H4 assembled in one H3-H4 heterotetramer and two H2A-H2B heterodimers. The octamer wraps approximately 147 bp of DNA. In terms of processing, monoubiquitinated to form H2BK143ub1; may give a specific tag for epigenetic transcriptional activation.

Its subcellular location is the nucleus. It is found in the chromosome. Core component of nucleosome. Nucleosomes wrap and compact DNA into chromatin, limiting DNA accessibility to the cellular machineries which require DNA as a template. Histones thereby play a central role in transcription regulation, DNA repair, DNA replication and chromosomal stability. DNA accessibility is regulated via a complex set of post-translational modifications of histones, also called histone code, and nucleosome remodeling. The polypeptide is Histone H2B.4 (Volvox carteri (Green alga)).